A 233-amino-acid polypeptide reads, in one-letter code: Phosphatidylserine decarboxylase proenzyme (233 aa).

Catalysis depends on Ser188, which acts as the Schiff-base intermediate with substrate; via pyruvic acid. A Pyruvic acid (Ser); by autocatalysis modification is found at Ser188.

This sequence belongs to the phosphatidylserine decarboxylase family. PSD-A subfamily. Heterodimer of a large membrane-associated beta subunit and a small pyruvoyl-containing alpha subunit. The cofactor is pyruvate. Is synthesized initially as an inactive proenzyme. Formation of the active enzyme involves a self-maturation process in which the active site pyruvoyl group is generated from an internal serine residue via an autocatalytic post-translational modification. Two non-identical subunits are generated from the proenzyme in this reaction, and the pyruvate is formed at the N-terminus of the alpha chain, which is derived from the carboxyl end of the proenzyme. The post-translation cleavage follows an unusual pathway, termed non-hydrolytic serinolysis, in which the side chain hydroxyl group of the serine supplies its oxygen atom to form the C-terminus of the beta chain, while the remainder of the serine residue undergoes an oxidative deamination to produce ammonia and the pyruvoyl prosthetic group on the alpha chain.

It is found in the cell membrane. The enzyme catalyses a 1,2-diacyl-sn-glycero-3-phospho-L-serine + H(+) = a 1,2-diacyl-sn-glycero-3-phosphoethanolamine + CO2. The protein operates within phospholipid metabolism; phosphatidylethanolamine biosynthesis; phosphatidylethanolamine from CDP-diacylglycerol: step 2/2. Functionally, catalyzes the formation of phosphatidylethanolamine (PtdEtn) from phosphatidylserine (PtdSer). This is Phosphatidylserine decarboxylase proenzyme from Ruegeria sp. (strain TM1040) (Silicibacter sp.).